The following is a 33-amino-acid chain: Protamine TP16 (33 aa).

A disordered region spans residues 1–33; that stretch reads MPRRRRSSSRPVRRRRRARVSRRRRRRGRRRRR.

Testis.

It is found in the nucleus. The protein localises to the chromosome. Its function is as follows. Protamines substitute for histones in the chromatin of sperm during the haploid phase of spermatogenesis. They compact sperm DNA into a highly condensed, stable and inactive complex. The protein is Protamine TP16 of Oncorhynchus mykiss (Rainbow trout).